Here is a 151-residue protein sequence, read N- to C-terminus: Deoxyuridine 5'-triphosphate nucleotidohydrolase (151 aa).

Substrate is bound by residues 70-72 (RSG), N83, 87-89 (LID), and M97.

This sequence belongs to the dUTPase family. The cofactor is Mg(2+).

It catalyses the reaction dUTP + H2O = dUMP + diphosphate + H(+). The protein operates within pyrimidine metabolism; dUMP biosynthesis; dUMP from dCTP (dUTP route): step 2/2. Functionally, this enzyme is involved in nucleotide metabolism: it produces dUMP, the immediate precursor of thymidine nucleotides and it decreases the intracellular concentration of dUTP so that uracil cannot be incorporated into DNA. This is Deoxyuridine 5'-triphosphate nucleotidohydrolase from Pseudomonas fluorescens (strain ATCC BAA-477 / NRRL B-23932 / Pf-5).